Here is a 417-residue protein sequence, read N- to C-terminus: UDP-N-acetylglucosamine 1-carboxyvinyltransferase (417 aa).

Position 22-23 (22-23) interacts with phosphoenolpyruvate; that stretch reads KN. Position 93 (Arg-93) interacts with UDP-N-acetyl-alpha-D-glucosamine. Catalysis depends on Cys-117, which acts as the Proton donor. Residue Cys-117 is modified to 2-(S-cysteinyl)pyruvic acid O-phosphothioketal. UDP-N-acetyl-alpha-D-glucosamine is bound by residues 122–126, Asp-304, and Ile-326; that span reads RPVDQ.

Belongs to the EPSP synthase family. MurA subfamily.

It is found in the cytoplasm. It carries out the reaction phosphoenolpyruvate + UDP-N-acetyl-alpha-D-glucosamine = UDP-N-acetyl-3-O-(1-carboxyvinyl)-alpha-D-glucosamine + phosphate. It participates in cell wall biogenesis; peptidoglycan biosynthesis. In terms of biological role, cell wall formation. Adds enolpyruvyl to UDP-N-acetylglucosamine. The polypeptide is UDP-N-acetylglucosamine 1-carboxyvinyltransferase (Neisseria meningitidis serogroup B (strain ATCC BAA-335 / MC58)).